Reading from the N-terminus, the 171-residue chain is Co-chaperone protein HscB (171 aa).

A J domain is found at 2 to 74; that stretch reads DYFTLFGLPA…LTRAEYLLSL (73 aa).

Belongs to the HscB family. As to quaternary structure, interacts with HscA and stimulates its ATPase activity. Interacts with IscU.

In terms of biological role, co-chaperone involved in the maturation of iron-sulfur cluster-containing proteins. Seems to help targeting proteins to be folded toward HscA. The polypeptide is Co-chaperone protein HscB (Salmonella heidelberg (strain SL476)).